A 477-amino-acid chain; its full sequence is Octopamine receptor (477 aa).

At 1–55 (MGQAATHVDANYTLINYTEEVIEDDRDACAVADDPKYPSSFGITLAVPEWEAICT) the chain is on the extracellular side. N-linked (GlcNAc...) asparagine glycans are attached at residues Asn11 and Asn16. Residues 56 to 78 (AIVLTLIIISTIVGNILVILSVF) traverse the membrane as a helical segment. The Cytoplasmic segment spans residues 79 to 88 (TYKPLRIVQN). Residues 89-110 (FFIVSLAVADLTVAILVLPLNV) form a helical membrane-spanning segment. Residues 111–127 (AYSILGQWVFGIYVCKM) are Extracellular-facing. The chain crosses the membrane as a helical span at residues 128–148 (WLTCDIMCCTSSILNLCAIAL). Topologically, residues 149–168 (DRYWAITDPINYAQKRTLER) are cytoplasmic. The chain crosses the membrane as a helical span at residues 169-191 (VLLMIGVVWVLSLIISSPPLLGW). At 192–216 (NDWPDVFEPDTPCRLTSQPGFVIFS) the chain is on the extracellular side. A helical membrane pass occupies residues 217-238 (SSGSFYIPLVIMTVVYFEIYLA). The Cytoplasmic portion of the chain corresponds to 239–405 (TKKRLRDRAK…LTRERRAART (167 aa)). Disordered stretches follow at residues 256–317 (SSGQ…SKDD) and 334–358 (VTDM…THED). 2 stretches are compositionally biased toward basic and acidic residues: residues 263–272 (NNKDDHHDQD) and 279–295 (NHNE…DNEK). Positions 296–312 (KKRTRKLTPKKKPKRKY) are enriched in basic residues. The helical transmembrane segment at 406–427 (LGIIMGVFVVCWLPFFVIYLVI) threads the bilayer. Over 428 to 439 (PFCASCCLSNKF) the chain is Extracellular. The helical transmembrane segment at 440 to 460 (INFITWLGYCNSALNPLIYTI) threads the bilayer. At 461–477 (FNMDFRRAFKKLLCMKP) the chain is on the cytoplasmic side.

Belongs to the G-protein coupled receptor 1 family.

Its subcellular location is the cell membrane. In terms of biological role, receptor for octopamine. Octopamine (OA) is a neurotransmitter, neurohormone, and neuromodulator in invertebrates. The activity of this receptor is mediated by G proteins which activate adenylyl cyclase. This chain is Octopamine receptor, found in Heliothis virescens (Tobacco budworm moth).